The primary structure comprises 398 residues: Argininosuccinate synthase (398 aa).

An ATP-binding site is contributed by 9-17; sequence AYSGGLDTS. Position 85 (tyrosine 85) interacts with L-citrulline. Residue glycine 115 participates in ATP binding. Residues threonine 117, asparagine 121, and aspartate 122 each coordinate L-aspartate. Asparagine 121 is an L-citrulline binding site. Residues arginine 125, serine 173, glutamate 258, and tyrosine 270 each coordinate L-citrulline.

The protein belongs to the argininosuccinate synthase family. Type 1 subfamily. As to quaternary structure, homotetramer.

The protein localises to the cytoplasm. It carries out the reaction L-citrulline + L-aspartate + ATP = 2-(N(omega)-L-arginino)succinate + AMP + diphosphate + H(+). It participates in amino-acid biosynthesis; L-arginine biosynthesis; L-arginine from L-ornithine and carbamoyl phosphate: step 2/3. This is Argininosuccinate synthase from Streptococcus pneumoniae (strain Hungary19A-6).